We begin with the raw amino-acid sequence, 463 residues long: NADH-ubiquinone oxidoreductase chain 4 (463 aa).

Transmembrane regions (helical) follow at residues 24 to 44 (LWAG…IVLN), 62 to 82 (TISA…LIAS), 98 to 118 (IIMI…LELI), 119 to 139 (LFYI…TRWG), 151 to 171 (FMFY…AIYI), 198 to 218 (WALS…HLWL), 232 to 252 (ILAA…IALF), 260 to 280 (LSLA…VICV), 285 to 305 (LKAL…AAIF), 310 to 330 (WGMN…SALF), 353 to 373 (LLLP…LGLP), 404 to 424 (VFGA…TPFT), and 442 to 462 (LHIL…IAWL).

The protein belongs to the complex I subunit 4 family.

The protein localises to the mitochondrion membrane. The catalysed reaction is a ubiquinone + NADH + 5 H(+)(in) = a ubiquinol + NAD(+) + 4 H(+)(out). Functionally, core subunit of the mitochondrial membrane respiratory chain NADH dehydrogenase (Complex I) that is believed to belong to the minimal assembly required for catalysis. Complex I functions in the transfer of electrons from NADH to the respiratory chain. The immediate electron acceptor for the enzyme is believed to be ubiquinone. In Strongylocentrotus purpuratus (Purple sea urchin), this protein is NADH-ubiquinone oxidoreductase chain 4 (ND4).